Here is an 894-residue protein sequence, read N- to C-terminus: MNIEGDDEEFYNFNDIKKKRKFTKEDAIYGVFNDGWGDYEDEEESKMTEEEYYKMKKRYSTPVGFVASGIYEPNEHKLKNKDGENIDNDDDDGEEKKKKKKEKKEKKQKKKEKKEKKEKKNKKKNKYGGGGGNNYDDSDNDKSIEDKPVGGIGAALLSKMGYKGTGGLGRDGGGMVEPIKVQVRPKNAGLASVTELNVNSSDDSDDSDQSEGDTDSDNENKRSLGWKKKEPKLKYDFDEHLESTTTTTFKKKTTTTTATTTTSSTPQIVIDMRGPEARLYTGMEEIKHHKHHHHHQHNKEYQNITSILDDQSKPLSELKHNVDLLLKLKQIDIQNQDNKIKHENDKINNLTRGVEKLKLTIENDKEQIKKVTEILETITTVKKQLDQSQLDLKQLYKVFKKLKSNYPKEYQNFKLYNLQKELLEPLLKEKLNQWELESNSDNNDNSSLEISKKLSKEMVKWRQLFQESVSVLGEYQINVYFLIMRDLFLPKFKNYLRSQWDVKKPSNAATLISTWSDTLPDVIQEALLEQSILPKLKVAIEKWDPRTDPIPLDHWLLPWIPLLGSELESFYPLIRQKIISALQDWHPSDKSAIKILTPWKNIFQSNSMDSLLNRAIIPKLSKSIKDLEINPSNQKSPIEIQWLLRWSNLNNNDNNNNNNNNNNNDNNNNNNSITTTDNINLDSGLITLSTIICILEKDFFTRWLKILLEWLKSPDANLEEISNWYSGWKKQFPKEIISNDKIKSIFNISLNLMKKVLSNETIQKDDEILISQKINSLLNTNINNNNNNNNNINNSYQQQNQQQPIKPISSPSLNSSNNNNIDNISTKQMVEQLAIKNGLLFIPSEKKTNSGQQIYIFDKIPIIIERDLIMYNNNNNNRWEPANIQYLLDKSLNK.

2 disordered regions span residues 71–149 (YEPN…DKPV) and 187–225 (NAGL…RSLG). The segment covering 73–84 (PNEHKLKNKDGE) has biased composition (basic and acidic residues). Over residues 97–126 (KKKKKEKKEKKQKKKEKKEKKEKKNKKKNK) the composition is skewed to basic residues. Residues 149–195 (VGGIGAALLSKMGYKGTGGLGRDGGGMVEPIKVQVRPKNAGLASVTE) enclose the G-patch domain. The segment covering 202 to 217 (DDSDDSDQSEGDTDSD) has biased composition (acidic residues). A coiled-coil region spans residues 329-449 (KQIDIQNQDN…SDNNDNSSLE (121 aa)). Positions 785–821 (NNNNNNNINNSYQQQNQQQPIKPISSPSLNSSNNNNI) are disordered.

Belongs to the TFP11/STIP family. In terms of assembly, identified in the spliceosome C complex.

Its subcellular location is the cytoplasm. The protein resides in the nucleus. May be involved in pre-mRNA splicing. The sequence is that of Septin and tuftelin-interacting protein 1 homolog (stip-1) from Dictyostelium discoideum (Social amoeba).